The following is a 168-amino-acid chain: MSAVDPIADMFSAIKNAIMRRDDFLYVPSSKLKERILDVLKKEGFIQDWEALKGEKYEEEYKKMKELAEKSPNPKMKRYLKQLEEYNKGTQYPIKIYLKYLDPKKRKSAITNIVKVSKGGRRVYAGVRTMPYVKRGLGIAIVSTDAGVMTDHEARRMRKGGEVIAFVW.

The interval 59–93 (EEYKKMKELAEKSPNPKMKRYLKQLEEYNKGTQYP) is not found in other S8 sequences.

This sequence belongs to the universal ribosomal protein uS8 family. In terms of assembly, part of the 30S ribosomal subunit. Contacts proteins S5 and S12.

Its function is as follows. One of the primary rRNA binding proteins, it binds directly to 16S rRNA central domain where it helps coordinate assembly of the platform of the 30S subunit. In Aquifex aeolicus (strain VF5), this protein is Small ribosomal subunit protein uS8.